Here is a 187-residue protein sequence, read N- to C-terminus: MPVDLGKWSGPLSLQEVEERPQHALHVKYTGTEVDELGKVLTPTQVKNRPTSIAWDGLDPGKLYTLVLTDPDAPSRKDPKYREWHHFLVVNMKGNDISSGTVLSDYVGSGPPKGTGLHRYVWLVYEQSGPLKCDEPILSNRSGDHRGKFKVASFRKKYELGPPVAGTCYQAEWDDYVPKLCEQLSGK.

The residue at position 13 (Ser-13) is a Phosphoserine. A Phosphothreonine modification is found at Thr-42. A phosphoserine mark is found at Ser-52, Ser-98, and Ser-153. The interval 93-134 (KGNDISSGTVLSDYVGSGPPKGTGLHRYVWLVYEQSGPLKCD) is interaction with RAF1.

Belongs to the phosphatidylethanolamine-binding protein family. Has a tendency to form dimers by disulfide cross-linking. Interacts with RAF1 and this interaction is enhanced if RAF1 is phosphorylated on residues 'Ser-338', 'Ser-339', 'Tyr-340' and 'Tyr-341'. Interacts with ALOX15; in response to IL13/interleukin-13, prevents the interaction of PEBP1 with RAF1 to activate the ERK signaling cascade.

Its subcellular location is the cytoplasm. Functionally, binds ATP, opioids and phosphatidylethanolamine. Has lower affinity for phosphatidylinositol and phosphatidylcholine. Serine protease inhibitor which inhibits thrombin, neuropsin and chymotrypsin but not trypsin, tissue type plasminogen activator and elastase. Involved in the positive regulation of epithelial cell migration. Inhibits the kinase activity of RAF1 by inhibiting its activation and by dissociating the RAF1/MEK complex and acting as a competitive inhibitor of MEK phosphorylation. HCNP may be involved in the function of the presynaptic cholinergic neurons of the central nervous system. HCNP increases the production of choline acetyltransferase but not acetylcholinesterase. Seems to be mediated by a specific receptor. This Canis lupus familiaris (Dog) protein is Phosphatidylethanolamine-binding protein 1 (PEBP1).